The sequence spans 197 residues: Elongation factor Ts (197 aa).

The involved in Mg(2+) ion dislocation from EF-Tu stretch occupies residues 81-84; that stretch reads TDFV.

This sequence belongs to the EF-Ts family.

It localises to the cytoplasm. In terms of biological role, associates with the EF-Tu.GDP complex and induces the exchange of GDP to GTP. It remains bound to the aminoacyl-tRNA.EF-Tu.GTP complex up to the GTP hydrolysis stage on the ribosome. This chain is Elongation factor Ts, found in Thermotoga neapolitana (strain ATCC 49049 / DSM 4359 / NBRC 107923 / NS-E).